Consider the following 580-residue polypeptide: Protein O-linked-mannose beta-1,4-N-acetylglucosaminyltransferase 2 (580 aa).

At 1–4 (MHLS) the chain is on the cytoplasmic side. Residues 5-25 (AVLNALLVSVLAAVLWKHVRL) traverse the membrane as a helical; Signal-anchor for type II membrane protein segment. Residues 26-580 (REHAAALEEE…PFADVLVCNT (555 aa)) lie on the Lumenal side of the membrane. N-linked (GlcNAc...) asparagine glycosylation is found at asparagine 99 and asparagine 276. The Fibronectin type-III domain maps to 488–580 (ARCQASVQGA…PFADVLVCNT (93 aa)).

Belongs to the glycosyltransferase 61 family.

The protein localises to the endoplasmic reticulum membrane. It carries out the reaction 3-O-(alpha-D-mannosyl)-L-threonyl-[protein] + UDP-N-acetyl-alpha-D-glucosamine = 3-O-(N-acetyl-beta-D-glucosaminyl-(1-&gt;4)-alpha-D-mannosyl)-L-threonyl-[protein] + UDP + H(+). The protein operates within protein modification; protein glycosylation. In terms of biological role, O-linked mannose beta-1,4-N-acetylglucosaminyltransferase that transfers UDP-N-acetyl-D-glucosamine to the 4-position of the mannose to generate N-acetyl-D-glucosamine-beta-1,4-O-D-mannosylprotein. Involved in the biosynthesis of the phosphorylated O-mannosyl trisaccharide (N-acetylgalactosamine-beta-3-N-acetylglucosamine-beta-4-(phosphate-6-)mannose), a carbohydrate structure present in alpha-dystroglycan (DAG1), which is required for binding laminin G-like domain-containing extracellular proteins with high affinity. This is Protein O-linked-mannose beta-1,4-N-acetylglucosaminyltransferase 2 (POMGNT2) from Canis lupus familiaris (Dog).